The following is a 311-amino-acid chain: Methionyl-tRNA formyltransferase (311 aa).

Position 112-115 (112-115 (SLLP)) interacts with (6S)-5,6,7,8-tetrahydrofolate.

It belongs to the Fmt family.

It carries out the reaction L-methionyl-tRNA(fMet) + (6R)-10-formyltetrahydrofolate = N-formyl-L-methionyl-tRNA(fMet) + (6S)-5,6,7,8-tetrahydrofolate + H(+). Its function is as follows. Attaches a formyl group to the free amino group of methionyl-tRNA(fMet). The formyl group appears to play a dual role in the initiator identity of N-formylmethionyl-tRNA by promoting its recognition by IF2 and preventing the misappropriation of this tRNA by the elongation apparatus. This Rhizobium leguminosarum bv. trifolii (strain WSM2304) protein is Methionyl-tRNA formyltransferase.